We begin with the raw amino-acid sequence, 317 residues long: MVVMNSLRVILQASPGKLLWRKFQIPRFMPARPCSLYTCTYKTRNRALHPLWESVDLVPGGDRQSPINIRWRDSVYDPGLKPLTISYDPATCLHVWNNGYSFLVEFEDSTDKSVIKGGPLEHNYRLKQFHFHWGAIDAWGSEHTVDSKCFPAELHLVHWNAVRFENFEDAALEENGLAVIGVFLKLGKHHKELQKLVDTLPSIKHKDALVEFGSFDPSCLMPTCPDYWTYSGSLTTPPLSESVTWIIKKQPVEVDHDQLEQFRTLLFTSEGEKEKRMVDNFRPLQPLMNRTVRSSFRHDYVLNVQAKPKPATSQATP.

The transit peptide at 1 to 33 (MVVMNSLRVILQASPGKLLWRKFQIPRFMPARP) directs the protein to the mitochondrion. The region spanning 37-296 (YTCTYKTRNR…LMNRTVRSSF (260 aa)) is the Alpha-carbonic anhydrase domain. Zn(2+) is bound by residues His130, His132, and His155. Position 235–236 (235–236 (TT)) interacts with substrate.

The protein belongs to the alpha-carbonic anhydrase family. It depends on Zn(2+) as a cofactor. Strongest expression in heart, pancreas, kidney, placenta, lung, and skeletal muscle. Not expressed in liver.

Its subcellular location is the mitochondrion. It catalyses the reaction hydrogencarbonate + H(+) = CO2 + H2O. Its activity is regulated as follows. Inhibited by coumarins, sulfonamide derivatives such as acetazolamide (AZA), saccharin and Foscarnet (phosphonoformate trisodium salt). Mitochondrial carbonic anhydrase that catalyzes the reversible conversion of carbon dioxide to bicarbonate/HCO3. This is Carbonic anhydrase 5B, mitochondrial (CA5B) from Homo sapiens (Human).